The following is a 332-amino-acid chain: Ketol-acid reductoisomerase (NAD(+)) (332 aa).

A KARI N-terminal Rossmann domain is found at 1–186 (MEILHDEDVD…HWTKAGILEC (186 aa)). NAD(+) is bound by residues 24–27 (YGAQ), Glu46, Asn55, Ser57, and 87–90 (DEVQ). Residue His112 is part of the active site. Gly138 contributes to the NAD(+) binding site. The KARI C-terminal knotted domain maps to 187–332 (TFEQETYEDL…AEIRKLFAQK (146 aa)). Mg(2+) contacts are provided by Asp195, Glu199, Glu231, and Glu235. Ser256 contacts substrate.

The protein belongs to the ketol-acid reductoisomerase family. In terms of assembly, homodimer. It depends on Mg(2+) as a cofactor.

The enzyme catalyses (2R)-2,3-dihydroxy-3-methylbutanoate + NAD(+) = (2S)-2-acetolactate + NADH + H(+). Its pathway is amino-acid biosynthesis; L-isoleucine biosynthesis; L-isoleucine from 2-oxobutanoate: step 2/4. It functions in the pathway amino-acid biosynthesis; L-valine biosynthesis; L-valine from pyruvate: step 2/4. Functionally, involved in the biosynthesis of branched-chain amino acids (BCAA). Catalyzes an alkyl-migration followed by a ketol-acid reduction of (S)-2-acetolactate (S2AL) to yield (R)-2,3-dihydroxy-isovalerate. In the isomerase reaction, S2AL is rearranged via a Mg-dependent methyl migration to produce 3-hydroxy-3-methyl-2-ketobutyrate (HMKB). In the reductase reaction, this 2-ketoacid undergoes a metal-dependent reduction by NADH to yield (R)-2,3-dihydroxy-isovalerate. The polypeptide is Ketol-acid reductoisomerase (NAD(+)) (Uncultured archaeon GZfos26G2).